Here is an 886-residue protein sequence, read N- to C-terminus: uncharacterized protein (886 aa).

The signal sequence occupies residues 1–20; it reads MKILKSLVLLVLFIVMPAKA. The next 6 helical transmembrane spans lie at 520-540, 563-583, 609-629, 647-667, 680-700, and 771-791; these read VIIF…IEVI, TYFF…VVGA, LLFI…IITI, IIAF…IILM, ISTL…FLLI, and FLVL…SYGL.

This sequence belongs to the TrbL/VirB6 family.

It is found in the cell membrane. This is an uncharacterized protein from Rickettsia typhi (strain ATCC VR-144 / Wilmington).